Here is a 344-residue protein sequence, read N- to C-terminus: tRNA N6-adenosine threonylcarbamoyltransferase (344 aa).

Fe cation contacts are provided by H111 and H115. Residues 133 to 137 (LVSGG), D166, G179, and N283 each bind substrate. D311 provides a ligand contact to Fe cation.

This sequence belongs to the KAE1 / TsaD family. Requires Fe(2+) as cofactor.

It localises to the cytoplasm. The catalysed reaction is L-threonylcarbamoyladenylate + adenosine(37) in tRNA = N(6)-L-threonylcarbamoyladenosine(37) in tRNA + AMP + H(+). Functionally, required for the formation of a threonylcarbamoyl group on adenosine at position 37 (t(6)A37) in tRNAs that read codons beginning with adenine. Is involved in the transfer of the threonylcarbamoyl moiety of threonylcarbamoyl-AMP (TC-AMP) to the N6 group of A37, together with TsaE and TsaB. TsaD likely plays a direct catalytic role in this reaction. The polypeptide is tRNA N6-adenosine threonylcarbamoyltransferase (Orientia tsutsugamushi (strain Boryong) (Rickettsia tsutsugamushi)).